The primary structure comprises 532 residues: uncharacterized protein (532 aa).

6 helical membrane-spanning segments follow: residues 7–26 (HSSYFSLFLIVALGFMLGRI), 30–52 (GLSLDVSAVIFIALLFGHFGVII), 59–77 (FGLVLFIFTIGIQAGPGFF), 87–109 (LILITMLIICSACLTAVGLKYAF), 116–134 (VVGLIAGALTSTPGLAVAI), and 139–161 (SPLASIAYGIAYPFGVIGVILFV). RCK C-terminal domains lie at 179–262 (LEIE…LIGE) and 263–346 (REEG…LLGN). Helical transmembrane passes span 356 to 376 (FFPIAMGIVLGVLFGKLNISF), 386 to 408 (LTGGVLMVALVLSAVGKTGPIIW), 421 to 440 (LGLLLFLAEVGTSAGKNLVA), 445 to 467 (SGLLMFGVGAAITVVPMLVAVIV), 474 to 496 (INILDLLGTITGGMTSTPGLAAA), and 506 to 528 (SVAYATVYPIAMVFLILFIQVIS).

Belongs to the AAE transporter (TC 2.A.81) family.

The protein resides in the cell membrane. This is an uncharacterized protein from Bacteroides thetaiotaomicron (strain ATCC 29148 / DSM 2079 / JCM 5827 / CCUG 10774 / NCTC 10582 / VPI-5482 / E50).